Here is a 120-residue protein sequence, read N- to C-terminus: Myohemerythrin (120 aa).

Fe cation-binding residues include histidine 26, histidine 56, glutamate 60, histidine 75, histidine 79, histidine 108, and aspartate 113.

This sequence belongs to the hemerythrin family.

Functionally, myohemerythrin is an oxygen-binding protein found in the retractor muscles of certain worms. The oxygen-binding site contains two iron atoms. The chain is Myohemerythrin from Riftia pachyptila (Vent tube worm).